Here is a 158-residue protein sequence, read N- to C-terminus: NAD(P)H-quinone oxidoreductase subunit J, chloroplastic (158 aa).

Belongs to the complex I 30 kDa subunit family. In terms of assembly, NDH is composed of at least 16 different subunits, 5 of which are encoded in the nucleus.

The protein resides in the plastid. Its subcellular location is the chloroplast thylakoid membrane. The enzyme catalyses a plastoquinone + NADH + (n+1) H(+)(in) = a plastoquinol + NAD(+) + n H(+)(out). It carries out the reaction a plastoquinone + NADPH + (n+1) H(+)(in) = a plastoquinol + NADP(+) + n H(+)(out). NDH shuttles electrons from NAD(P)H:plastoquinone, via FMN and iron-sulfur (Fe-S) centers, to quinones in the photosynthetic chain and possibly in a chloroplast respiratory chain. The immediate electron acceptor for the enzyme in this species is believed to be plastoquinone. Couples the redox reaction to proton translocation, and thus conserves the redox energy in a proton gradient. This Nandina domestica (Heavenly bamboo) protein is NAD(P)H-quinone oxidoreductase subunit J, chloroplastic.